A 38-amino-acid polypeptide reads, in one-letter code: Large ribosomal subunit protein bL36 (38 aa).

It belongs to the bacterial ribosomal protein bL36 family.

This chain is Large ribosomal subunit protein bL36, found in Ralstonia nicotianae (strain ATCC BAA-1114 / GMI1000) (Ralstonia solanacearum).